Reading from the N-terminus, the 139-residue chain is Transcription antitermination protein NusB (139 aa).

Belongs to the NusB family.

Functionally, involved in transcription antitermination. Required for transcription of ribosomal RNA (rRNA) genes. Binds specifically to the boxA antiterminator sequence of the ribosomal RNA (rrn) operons. This is Transcription antitermination protein NusB from Limosilactobacillus fermentum (strain NBRC 3956 / LMG 18251) (Lactobacillus fermentum).